The primary structure comprises 199 residues: Charged multivesicular body protein 1b (199 aa).

Coiled coils occupy residues 15-42 (AKELHRNAKKCEKEEKTEKAKIKKAIQK) and 178-199 (TSVASTEQDELSQRLARLRDQV). Residues 167–199 (ELPQGQTGSVGTSVASTEQDELSQRLARLRDQV) are disordered. Residues 170–183 (QGQTGSVGTSVAST) are compositionally biased toward polar residues. The short motif at 186-196 (DELSQRLARLR) is the MIT-interacting motif element.

This sequence belongs to the SNF7 family.

It localises to the cytoplasm. The protein localises to the cytosol. Its subcellular location is the endosome. It is found in the late endosome membrane. Probable peripherally associated component of the endosomal sorting required for transport complex III (ESCRT-III) which is involved in multivesicular bodies (MVBs) formation and sorting of endosomal cargo proteins into MVBs. MVBs contain intraluminal vesicles (ILVs) that are generated by invagination and scission from the limiting membrane of the endosome and mostly are delivered to lysosomes enabling degradation of membrane proteins, such as stimulated growth factor receptors, lysosomal enzymes and lipids. This Xenopus tropicalis (Western clawed frog) protein is Charged multivesicular body protein 1b (chmp1b).